Here is a 450-residue protein sequence, read N- to C-terminus: Probable ECA polymerase (450 aa).

11 consecutive transmembrane segments (helical) span residues 6–26 (FSGL…LTWF), 37–57 (VFFS…TSVL), 63–83 (VGVA…CFYA), 118–138 (VILM…NGFL), 155–175 (GVAL…VYFL), 181–201 (AWLF…MIVG), 207–227 (IIIA…ISLW), 228–248 (MLAA…LKRY), 341–361 (LVVM…GLII), 378–398 (YKAA…IVLA), and 410–430 (VFFI…YWLF).

It belongs to the WzyE family. Probably part of a complex composed of WzxE, WzyE and WzzE.

The protein localises to the cell inner membrane. Its pathway is bacterial outer membrane biogenesis; enterobacterial common antigen biosynthesis. Its function is as follows. Probably involved in the polymerization of enterobacterial common antigen (ECA) trisaccharide repeat units. This Escherichia coli O17:K52:H18 (strain UMN026 / ExPEC) protein is Probable ECA polymerase.